A 95-amino-acid chain; its full sequence is Ribonuclease P protein component 1 (95 aa).

This sequence belongs to the eukaryotic/archaeal RNase P protein component 1 family. As to quaternary structure, consists of a catalytic RNA component and at least 4 protein subunits. Forms a subcomplex with Rnp4 which stimulates the catalytic RNA.

The protein localises to the cytoplasm. The enzyme catalyses Endonucleolytic cleavage of RNA, removing 5'-extranucleotides from tRNA precursor.. Part of ribonuclease P, a protein complex that generates mature tRNA molecules by cleaving their 5'-ends. This is Ribonuclease P protein component 1 from Methanocaldococcus jannaschii (strain ATCC 43067 / DSM 2661 / JAL-1 / JCM 10045 / NBRC 100440) (Methanococcus jannaschii).